The following is a 188-amino-acid chain: Acireductone dioxygenase (188 aa).

Fe(2+)-binding residues include His-97, His-99, Glu-103, and His-141. Ni(2+)-binding residues include His-97, His-99, Glu-103, and His-141.

It belongs to the acireductone dioxygenase (ARD) family. Monomer. The cofactor is Fe(2+). It depends on Ni(2+) as a cofactor.

It carries out the reaction 1,2-dihydroxy-5-(methylsulfanyl)pent-1-en-3-one + O2 = 3-(methylsulfanyl)propanoate + CO + formate + 2 H(+). It catalyses the reaction 1,2-dihydroxy-5-(methylsulfanyl)pent-1-en-3-one + O2 = 4-methylsulfanyl-2-oxobutanoate + formate + 2 H(+). It participates in amino-acid biosynthesis; L-methionine biosynthesis via salvage pathway; L-methionine from S-methyl-5-thio-alpha-D-ribose 1-phosphate: step 5/6. Functionally, catalyzes 2 different reactions between oxygen and the acireductone 1,2-dihydroxy-3-keto-5-methylthiopentene (DHK-MTPene) depending upon the metal bound in the active site. Fe-containing acireductone dioxygenase (Fe-ARD) produces formate and 2-keto-4-methylthiobutyrate (KMTB), the alpha-ketoacid precursor of methionine in the methionine recycle pathway. Ni-containing acireductone dioxygenase (Ni-ARD) produces methylthiopropionate, carbon monoxide and formate, and does not lie on the methionine recycle pathway. The sequence is that of Acireductone dioxygenase from Gluconobacter oxydans (strain 621H) (Gluconobacter suboxydans).